Reading from the N-terminus, the 184-residue chain is mRNA transport regulator MTR2 (184 aa).

The tract at residues 111-135 (KMGQDATVPIQPNNTGNRNRPNDMN) is disordered. A compositionally biased stretch (polar residues) spans 120 to 129 (IQPNNTGNRN). Threonine 125 is modified (phosphothreonine).

In terms of assembly, interacts with MEX67.

The protein resides in the nucleus. Its function is as follows. Affects mRNA transport from the nucleus to the cytoplasm. In Saccharomyces cerevisiae (strain ATCC 204508 / S288c) (Baker's yeast), this protein is mRNA transport regulator MTR2 (MTR2).